The following is a 1479-amino-acid chain: Peroxidasin homolog (1479 aa).

The first 26 residues, 1-26 (MAKRSRGPGRRCLLALVLFCAWGTLA), serve as a signal peptide directing secretion. The 37-residue stretch at 27–63 (VVAQKPGAGCPSRCLCFRTTVRCMHLLLEAVPAVAPQ) folds into the LRRNT domain. 2 disulfides stabilise this stretch: Cys36/Cys42 and Cys40/Cys49. 6 LRR repeats span residues 61-84 (APQT…AFRR), 85-108 (LRNL…AFED), 110-132 (ENLK…AFKG), 133-156 (LASL…SFQH), 157-180 (LPKL…TFNH), and 182-204 (ESMK…LWLA). Residues 192–244 (NTLHCDCEILWLADLLKTYAESGNAQAAAICEYPRRIQGRSVATITPEELNCE) form the LRRCT domain. Cystine bridges form between Cys196–Cys243, Cys198–Cys222, Cys267–Cys317, Cys363–Cys412, Cys454–Cys502, and Cys546–Cys594. 4 Ig-like C2-type domains span residues 246-332 (PRIT…QEVT), 342-428 (PTFV…AFII), 433-520 (PQFT…LTVQ), and 521-610 (PRVT…MVLS). Asn640, Asn699, Asn719, and Asn731 each carry an N-linked (GlcNAc...) asparagine glycan. Disulfide bonds link Cys723–Cys885, Cys732–Cys748, Cys847–Cys857, and Cys851–Cys875. Residue Asp826 participates in heme b binding. The active-site Proton acceptor is His827. Residue Asp828 coordinates Ca(2+). N-linked (GlcNAc...) asparagine glycosylation is present at Asn865. Ca(2+) contacts are provided by Thr907, Tyr909, Asp911, and Ser913. Residues Cys959 and Cys970 are joined by a disulfide bond. N-linked (GlcNAc...) asparagine glycosylation occurs at Asn964. Heme b is bound by residues Glu980 and His1074. The LRR 7 repeat unit spans residues 1151 to 1175 (ALDLAAINIQRGRDHGIPPYHDYRV). Tyr1176 carries the phosphotyrosine modification. Cystine bridges form between Cys1177–Cys1234 and Cys1275–Cys1301. A glycan (N-linked (GlcNAc...) asparagine) is linked at Asn1178. The residue at position 1180 (Ser1180) is a Phosphoserine. An LRR 8 repeat occupies 1270–1291 (LARILCDNADNITRVQSDVFRV). Residues Asn1280, Asn1368, and Asn1425 are each glycosylated (N-linked (GlcNAc...) asparagine). Residues 1315–1411 (CCEDCRTRGQ…QIKKLESRLS (97 aa)) are required in homotrimerization. The interval 1342-1380 (YQEDKPTKKTRPRKIPSVGRQGEHLSNSTSAFSTRSDAS) is disordered. Residues 1365 to 1380 (HLSNSTSAFSTRSDAS) are compositionally biased toward polar residues. The region spanning 1413–1471 (TECVDAGGESHANNTKWKKDACTICECKDGQVTCFVEACPPATCAVPVNIPGACCPVCL) is the VWFC domain.

The protein belongs to the peroxidase family. XPO subfamily. In terms of assembly, homotrimer; disulfide-linked. The homotrimer form is predominant. Homooligomer; disulfide-linked. Oligomerization occurs intracellularly before C-terminal proteolytic cleavage. Interacts with PXDNL; this interaction inhibits the peroxidase activity of PXDN. The cofactor is Ca(2+). Heme b serves as cofactor. In terms of processing, glycosylated. Four sites are completely N-glycosylated (Asn-640, Asn-731, Asn-865 and Asn-1425), whereas the others are found partially glycosylated. Post-translationally, processed by FURIN and the proteolytic processing largely depends on the peroxidase activity of PXDN. The proteolytic cleavage occurs after intracellular homotrimerization and releases into the extracellular matrix a large, catalytically active fragment and a smaller fragment consisting primarily of the C-terminal VWFC domain. The processing enhances both peroxidase activity and sulfilimine cross-links formation. Expressed at higher levels in heart, lung, ovary, spleen, intestine and placenta, and at lower levels in liver, colon, pancreas, kidney, thymus, skeletal muscle and prostate. Expressed in tumors such as melanoma, breast cancer, ovarian cancer and glioblastoma. A shorter form probably lacking the signal sequence is found in testis and in EB1 cells undergoing p53/TP53-dependent apoptosis.

The protein resides in the secreted. Its subcellular location is the extracellular space. The protein localises to the extracellular matrix. It localises to the endoplasmic reticulum. It is found in the cell surface. The protein resides in the basement membrane. The catalysed reaction is L-lysyl-[collagen] + L-methionyl-[collagen] + H2O2 = [collagen]-L-lysyl-N-S-L-methionyl-[collagen] + 2 H2O + H(+). The enzyme catalyses bromide + H2O2 = hypobromite + H2O. It catalyses the reaction L-lysyl-[collagen] + L-methionyl-[collagen] + hypobromite = [collagen]-L-lysyl-N-S-L-methionyl-[collagen] + bromide + H2O + H(+). It carries out the reaction L-tyrosyl-[protein] + bromide + H2O2 + H(+) = 3-bromo-L-tyrosyl-[protein] + 2 H2O. The catalysed reaction is hypobromite + L-tyrosyl-[protein] + H(+) = 3-bromo-L-tyrosyl-[protein] + H2O. With respect to regulation, the hypobromous acid formation is activated by increasing nitrite concentrations and inhibited by increasing urate concentrations. Its function is as follows. Catalyzes the two-electron oxidation of bromide by hydrogen peroxide and generates hypobromite as a reactive intermediate which mediates the formation of sulfilimine cross-links between methionine and hydroxylysine residues within an uncross-linked collagen IV/COL4A1 NC1 hexamer. In turns, directly contributes to the collagen IV network-dependent fibronectin/FN and laminin assembly, which is required for full extracellular matrix (ECM)-mediated signaling. Thus, sulfilimine cross-links are essential for growth factor-induced cell proliferation and survival in endothelial cells, an event essential to basement membrane integrity. In addition, through the bromide oxidation, may promote tubulogenesis and induce angiogenesis through ERK1/2, Akt, and FAK pathways. Moreover brominates alpha2 collagen IV chain/COL4A2 at 'Tyr-1485' and leads to bromine enrichment of the basement membranes. In vitro, can also catalyze the two-electron oxidation of thiocyanate and iodide and these two substrates could effectively compete with bromide and thus inhibit the formation of sulfilimine bonds. Binds laminins. May play a role in the organization of eyeball structure and lens development during eye development. This is Peroxidasin homolog from Homo sapiens (Human).